Reading from the N-terminus, the 4351-residue chain is Protocadherin Fat 2 (4351 aa).

The signal sequence occupies residues M1 to C18. Residues E19–E4050 are Extracellular-facing. 2 Cadherin domains span residues T34 to F148 and S149 to I256. 4 N-linked (GlcNAc...) asparagine glycosylation sites follow: N39, N210, N280, and N330. Cadherin domains are found at residues E363–F458, N459–F564, E565–Q669, D716–F820, P821–C925, I926–F1032, S1033–F1142, S1138–F1242, S1243–P1346, D1350–F1448, L1449–F1555, T1556–F1660, S1661–F1758, G1759–F1872, S1873–F1968, D1969–F2070, Q2071–F2171, Q2172–F2272, S2273–F2379, R2380–F2481, Q2482–F2585, K2586–F2692, S2693–F2799, E2800–F2908, A2909–C3013, S3014–F3115, F3116–F3220, L3221–F3323, T3324–F3428, F3429–T3533, and L3534–Q3631. N-linked (GlcNAc...) asparagine glycosylation is found at N459, N568, N627, and N789. The N-linked (GlcNAc...) asparagine glycan is linked to N996. N1175, N1276, and N1417 each carry an N-linked (GlcNAc...) asparagine glycan. N-linked (GlcNAc...) asparagine glycans are attached at residues N1899, N1998, N2007, N2102, N2165, N2183, N2325, N2368, N2387, N2430, N2470, N2547, and N2597. N-linked (GlcNAc...) asparagine glycosylation is found at N3127, N3278, and N3312. N3432, N3603, N3770, N3774, N3815, N3842, N3875, and N3906 each carry an N-linked (GlcNAc...) asparagine glycan. In terms of domain architecture, Laminin G-like spans G3775–C3946. 4 disulfides stabilise this stretch: C3914-C3946, C3953-C3964, C3958-C3974, and C3976-C3985. EGF-like domains follow at residues P3949 to E3986 and G3988 to E4024. Residue N3991 is glycosylated (N-linked (GlcNAc...) asparagine). Intrachain disulfides connect C3992–C4003, C3997–C4012, and C4014–C4023. The chain crosses the membrane as a helical span at residues F4051–Y4071. The Cytoplasmic segment spans residues C4072 to F4351. Residues V4316–E4340 form a disordered region.

Homodimer. As to expression, cerebellum-specific expression. Expressed in thin parallel fibers of cerebellar granule cells.

It localises to the cell membrane. It is found in the cell junction. Its subcellular location is the golgi apparatus. The protein resides in the trans-Golgi network. Functionally, involved in the regulation of cell migration. May be involved in mediating the organization of the parallel fibers of granule cells during cerebellar development. This is Protocadherin Fat 2 (Fat2) from Rattus norvegicus (Rat).